A 175-amino-acid polypeptide reads, in one-letter code: MLILNQRTQQLATDSVALAYDERKRSRLKVTLASGAEAGIFLERGDHLHGGDKLAAEDGSAVVEILAAPEKLIEAIADSPLLFARAAYHLGNRHVPVQILPTENGGKLRFQTDHVLAEMVRGLGCSVSDAEAPFQPESGAYGGGHHHGDESATDLHNPGHGPHRSVPKIHEFKPR.

The segment at 134–175 (FQPESGAYGGGHHHGDESATDLHNPGHGPHRSVPKIHEFKPR) is disordered.

The protein belongs to the UreE family.

The protein resides in the cytoplasm. Its function is as follows. Involved in urease metallocenter assembly. Binds nickel. Probably functions as a nickel donor during metallocenter assembly. This chain is Urease accessory protein UreE, found in Dechloromonas aromatica (strain RCB).